Consider the following 312-residue polypeptide: Glyoxylate/hydroxypyruvate reductase A (312 aa).

Residue arginine 227 is part of the active site. The active-site Proton donor is histidine 275.

Belongs to the D-isomer specific 2-hydroxyacid dehydrogenase family. GhrA subfamily.

The protein resides in the cytoplasm. The enzyme catalyses glycolate + NADP(+) = glyoxylate + NADPH + H(+). It carries out the reaction (R)-glycerate + NAD(+) = 3-hydroxypyruvate + NADH + H(+). It catalyses the reaction (R)-glycerate + NADP(+) = 3-hydroxypyruvate + NADPH + H(+). Catalyzes the NADPH-dependent reduction of glyoxylate and hydroxypyruvate into glycolate and glycerate, respectively. The polypeptide is Glyoxylate/hydroxypyruvate reductase A (Citrobacter koseri (strain ATCC BAA-895 / CDC 4225-83 / SGSC4696)).